The following is a 118-amino-acid chain: Phosphoribosyl-AMP cyclohydrolase (118 aa).

D87 is a binding site for Mg(2+). C88 is a binding site for Zn(2+). Residues D89 and D91 each contribute to the Mg(2+) site. Zn(2+) contacts are provided by C104 and C111.

The protein belongs to the PRA-CH family. In terms of assembly, homodimer. Requires Mg(2+) as cofactor. Zn(2+) is required as a cofactor.

The protein localises to the cytoplasm. It carries out the reaction 1-(5-phospho-beta-D-ribosyl)-5'-AMP + H2O = 1-(5-phospho-beta-D-ribosyl)-5-[(5-phospho-beta-D-ribosylamino)methylideneamino]imidazole-4-carboxamide. It participates in amino-acid biosynthesis; L-histidine biosynthesis; L-histidine from 5-phospho-alpha-D-ribose 1-diphosphate: step 3/9. Catalyzes the hydrolysis of the adenine ring of phosphoribosyl-AMP. The protein is Phosphoribosyl-AMP cyclohydrolase of Corynebacterium glutamicum (strain R).